The sequence spans 198 residues: Ribonuclease HII (198 aa).

In terms of domain architecture, RNase H type-2 spans 11–198 (NLIAGVDEVG…GPVKRVLGLV (188 aa)). A divalent metal cation contacts are provided by Asp-17, Glu-18, and Asp-109.

It belongs to the RNase HII family. Requires Mn(2+) as cofactor. It depends on Mg(2+) as a cofactor.

It localises to the cytoplasm. The catalysed reaction is Endonucleolytic cleavage to 5'-phosphomonoester.. Its function is as follows. Endonuclease that specifically degrades the RNA of RNA-DNA hybrids. This chain is Ribonuclease HII, found in Yersinia pseudotuberculosis serotype O:3 (strain YPIII).